The sequence spans 155 residues: uncharacterized protein (155 aa).

Residues 1-14 (MLTLSGWITTQVPP) show a composition bias toward polar residues. The interval 1–44 (MLTLSGWITTQVPPSSRAAADAKAARTGTAEQAEDPAAGTDAAD) is disordered. Over residues 17-30 (RAAADAKAARTGTA) the composition is skewed to low complexity.

This is an uncharacterized protein from Pseudomonas aeruginosa (strain ATCC 15692 / DSM 22644 / CIP 104116 / JCM 14847 / LMG 12228 / 1C / PRS 101 / PAO1).